A 926-amino-acid chain; its full sequence is Mating-type protein A-alpha Y3 (926 aa).

The homeobox DNA-binding region spans 147–206 (YKKPRPKFHSEYTPLLELYFHFNAYPTFADRRMLAEKTGMQTRQITVWFQNHRRRAKGPL). Disordered stretches follow at residues 238–281 (SHLR…KVGK), 308–374 (QQAP…TSSA), 424–452 (GKGK…SRLN), and 625–734 (RARK…MNES). 2 stretches are compositionally biased toward basic and acidic residues: residues 267–281 (KKPD…KVGK) and 326–338 (NAQD…ATKS). Over residues 428–441 (PSQNLTSTPATFST) the composition is skewed to polar residues. Residues 632-660 (KQAEKEARKEEKRARKEAKQAKKDRKEQR) are compositionally biased toward basic and acidic residues. 2 stretches are compositionally biased toward low complexity: residues 669 to 687 (STLD…SATS) and 699 to 724 (SSAS…SGTS).

It localises to the nucleus. In terms of biological role, specifies A-alpha-3 mating-type. May regulate the expression of genes specific to the homokaryotic cell type. The sequence is that of Mating-type protein A-alpha Y3 from Schizophyllum commune (Split gill fungus).